Consider the following 644-residue polypeptide: MEFYRSSRRLQILGSVILLLSIHVAHSFYLPGVAPQDFEKGDELKVKVNKLTSIKTQLPYSYYSLPFCRPKKIVDSTENLGEVLRGDRIENAPYSFKMREAQMCNVLGRVMLDAKSAKAFKEKIDDEYRVNMILDNLPLVVPIERIDPGQGSPSVVYQLGYHVGLKGQYEGSKEQKYFMHNHLAFTVRYHRDMQTDAARIVGFEVKPYSVKHEYEGQWSEKTRLTTCDPHTKRLVVSSATPQEVENKKEIIFTYDVDFQESEVKWASRWDAYLLMSDNQIHWFSIVNSLMIVLFLSGMVAMIMLRTLYRDISRYNELETQEEAQEETGWKLVHGDVFRPPANSDLLCVYVGTGVQCLGMVLVTMIFAMLGFLSPSNRGGLMTAMLLLWVFMGLFAGYASSRLYKMFKGTEWKRIAFRTAFLFPAVVSAIFFVLNALIWGQKSSGAVPFGTMFALIFLWFGISVPLVFVGAYLGFKKPPLDDPVKTNKIPRQIPEQAWYMNPIFSILIGGILPFGAVFIELFFILTSIWLNQFYYIFGFLFLVFVILMVTCAEITIVLCYFQLCSEDYLWWWRSYLTSGSSAVYLFLYAAFYFFTKLQITKLVSAMLYFGYMLIASYAFFVLTGTIGFYACLWFTRLIYSSVKID.

The N-terminal stretch at 1-27 is a signal peptide; sequence MEFYRSSRRLQILGSVILLLSIHVAHS. At 28 to 281 the chain is on the lumenal side; sequence FYLPGVAPQD…YLLMSDNQIH (254 aa). A helical transmembrane segment spans residues 282–302; sequence WFSIVNSLMIVLFLSGMVAMI. At 303 to 351 the chain is on the cytoplasmic side; it reads MLRTLYRDISRYNELETQEEAQEETGWKLVHGDVFRPPANSDLLCVYVG. The chain crosses the membrane as a helical span at residues 352 to 372; it reads TGVQCLGMVLVTMIFAMLGFL. The Lumenal segment spans residues 373 to 377; it reads SPSNR. A helical membrane pass occupies residues 378–398; sequence GGLMTAMLLLWVFMGLFAGYA. The Cytoplasmic portion of the chain corresponds to 399-418; sequence SSRLYKMFKGTEWKRIAFRT. A helical transmembrane segment spans residues 419–439; it reads AFLFPAVVSAIFFVLNALIWG. Residues 440 to 451 lie on the Lumenal side of the membrane; the sequence is QKSSGAVPFGTM. The helical transmembrane segment at 452–472 threads the bilayer; sequence FALIFLWFGISVPLVFVGAYL. Residues 473–501 are Cytoplasmic-facing; it reads GFKKPPLDDPVKTNKIPRQIPEQAWYMNP. A helical membrane pass occupies residues 502–522; sequence IFSILIGGILPFGAVFIELFF. Residues 523-534 are Lumenal-facing; it reads ILTSIWLNQFYY. The helical transmembrane segment at 535–555 threads the bilayer; that stretch reads IFGFLFLVFVILMVTCAEITI. Over 556–573 the chain is Cytoplasmic; sequence VLCYFQLCSEDYLWWWRS. A helical membrane pass occupies residues 574–594; sequence YLTSGSSAVYLFLYAAFYFFT. Residues 595–600 lie on the Lumenal side of the membrane; it reads KLQITK. A helical transmembrane segment spans residues 601 to 621; the sequence is LVSAMLYFGYMLIASYAFFVL. Topologically, residues 622-644 are cytoplasmic; sequence TGTIGFYACLWFTRLIYSSVKID. Residues 633–638 carry the Endoplasmic reticulum export signal motif; it reads FTRLIY. The short motif at 642-644 is the Golgi retention signal element; sequence KID.

Belongs to the nonaspanin (TM9SF) (TC 9.A.2) family.

The protein resides in the endosome membrane. It is found in the golgi apparatus membrane. In Arabidopsis thaliana (Mouse-ear cress), this protein is Transmembrane 9 superfamily member 9.